The following is an 84-amino-acid chain: Exodeoxyribonuclease 7 small subunit (84 aa).

This sequence belongs to the XseB family. As to quaternary structure, heterooligomer composed of large and small subunits.

It is found in the cytoplasm. It carries out the reaction Exonucleolytic cleavage in either 5'- to 3'- or 3'- to 5'-direction to yield nucleoside 5'-phosphates.. In terms of biological role, bidirectionally degrades single-stranded DNA into large acid-insoluble oligonucleotides, which are then degraded further into small acid-soluble oligonucleotides. This chain is Exodeoxyribonuclease 7 small subunit, found in Bacillus velezensis (strain DSM 23117 / BGSC 10A6 / LMG 26770 / FZB42) (Bacillus amyloliquefaciens subsp. plantarum).